A 343-amino-acid polypeptide reads, in one-letter code: Probable beta-1,3-galactosyltransferase 13 (343 aa).

A helical; Signal-anchor for type II membrane protein membrane pass occupies residues 22-42; the sequence is LIVFTSLAIGLTGFLFGLSTI. N265 carries an N-linked (GlcNAc...) asparagine glycan.

The protein belongs to the glycosyltransferase 31 family. Requires Mn(2+) as cofactor.

The protein localises to the golgi apparatus membrane. The protein operates within protein modification; protein glycosylation. Beta-1,3-galactosyltransferase that transfers galactose from UDP-galactose to substrates with a terminal glycosyl residue. This Arabidopsis thaliana (Mouse-ear cress) protein is Probable beta-1,3-galactosyltransferase 13 (B3GALT13).